The primary structure comprises 359 residues: Protein Wnt-5a (359 aa).

The first 20 residues, 1-20, serve as a signal peptide directing secretion; sequence MASRYLTLAAALLASFLQVD. Cysteines 83 and 94 form a disulfide. Residues asparagine 93 and asparagine 99 are each glycosylated (N-linked (GlcNAc...) asparagine). 10 disulfide bridges follow: cysteine 133–cysteine 141, cysteine 143–cysteine 161, cysteine 217–cysteine 231, cysteine 219–cysteine 226, cysteine 288–cysteine 319, cysteine 304–cysteine 314, cysteine 318–cysteine 358, cysteine 334–cysteine 349, cysteine 336–cysteine 346, and cysteine 341–cysteine 342. Serine 223 is lipidated: O-palmitoleoyl serine; by PORCN. Residues asparagine 291 and asparagine 305 are each glycosylated (N-linked (GlcNAc...) asparagine).

The protein belongs to the Wnt family. Palmitoleoylation is required for efficient binding to frizzled receptors. Depalmitoleoylation leads to Wnt signaling pathway inhibition.

Its subcellular location is the secreted. The protein resides in the extracellular space. The protein localises to the extracellular matrix. Its function is as follows. Ligand for members of the frizzled family of seven transmembrane receptors. Can activate or inhibit canonical Wnt signaling, depending on receptor context. Required during embryogenesis for extension of the primary anterior-posterior axis. The polypeptide is Protein Wnt-5a (WNT5A) (Pleurodeles waltl (Iberian ribbed newt)).